The chain runs to 246 residues: Isoprenyl transferase (246 aa).

Aspartate 18 is a catalytic residue. Position 18 (aspartate 18) interacts with Mg(2+). Substrate contacts are provided by residues 19-22 (GNGR), tryptophan 23, arginine 31, histidine 35, and 63-65 (SAE). Residue asparagine 66 is the Proton acceptor of the active site. Substrate-binding positions include tryptophan 67, arginine 69, arginine 186, and 192–194 (RIS). Residue glutamate 205 coordinates Mg(2+).

This sequence belongs to the UPP synthase family. As to quaternary structure, homodimer. Mg(2+) is required as a cofactor.

In terms of biological role, catalyzes the condensation of isopentenyl diphosphate (IPP) with allylic pyrophosphates generating different type of terpenoids. The sequence is that of Isoprenyl transferase from Geobacter sulfurreducens (strain ATCC 51573 / DSM 12127 / PCA).